Consider the following 385-residue polypeptide: Beta-lactamase (385 aa).

The first 20 residues, 1-20, serve as a signal peptide directing secretion; the sequence is MKRLLAFCLLFFAALGQAKV. S84 (acyl-ester intermediate) is an active-site residue. Y170 functions as the Proton acceptor in the catalytic mechanism. Residue 335–337 coordinates substrate; sequence KTG.

This sequence belongs to the class-C beta-lactamase family.

The protein localises to the periplasm. It carries out the reaction a beta-lactam + H2O = a substituted beta-amino acid. Functionally, this protein is a serine beta-lactamase with a substrate specificity for cephalosporins. The chain is Beta-lactamase from Lysobacter lactamgenus.